Here is a 369-residue protein sequence, read N- to C-terminus: Biglycan (369 aa).

A signal peptide spans M1–A16. Residues L17–N37 constitute a propeptide that is removed on maturation. Residues S42 and S48 are each glycosylated (O-linked (Xyl...) (glycosaminoglycan) serine). 2 disulfide bridges follow: C64/C70 and C68/C77. LRR repeat units lie at residues K83 to I103, S104 to I127, S128 to L151, V152 to I172, R173 to L196, E197 to L221, T222 to I242, Q243 to I266, R267 to L290, S291 to I313, T314 to V343, and P344 to K369. N271 and N312 each carry an N-linked (GlcNAc...) asparagine glycan. A disulfide bridge links C322 with C355.

The protein belongs to the small leucine-rich proteoglycan (SLRP) family. SLRP class I subfamily. Homodimer. Forms a ternary complex with MFAP2 and ELN. In terms of processing, the two attached glycosaminoglycan chains can be either chondroitin sulfate or dermatan sulfate.

The protein resides in the secreted. It is found in the extracellular space. The protein localises to the extracellular matrix. May be involved in collagen fiber assembly. This is Biglycan (BGN) from Canis lupus familiaris (Dog).